The sequence spans 189 residues: Small ribosomal subunit protein uS5 (189 aa).

Residues 22 to 85 (LIDKLVTINR…ERAKRGMIRV (64 aa)) form the S5 DRBM domain. The tract at residues 164-189 (SVASRRGKKVADLFGPKREKEAPADV) is disordered. Positions 172–189 (KVADLFGPKREKEAPADV) are enriched in basic and acidic residues.

Belongs to the universal ribosomal protein uS5 family. Part of the 30S ribosomal subunit. Contacts proteins S4 and S8.

With S4 and S12 plays an important role in translational accuracy. In terms of biological role, located at the back of the 30S subunit body where it stabilizes the conformation of the head with respect to the body. The sequence is that of Small ribosomal subunit protein uS5 from Acidiphilium cryptum (strain JF-5).